A 484-amino-acid chain; its full sequence is Glutamate--tRNA ligase (484 aa).

Residues 11–21 carry the 'HIGH' region motif; it reads PSPTGLLHIGN. The 'KMSKS' region signature appears at 255–259; sequence KLSKR. Lys-258 is a binding site for ATP.

Belongs to the class-I aminoacyl-tRNA synthetase family. Glutamate--tRNA ligase type 1 subfamily. As to quaternary structure, monomer.

The protein resides in the cytoplasm. The enzyme catalyses tRNA(Glu) + L-glutamate + ATP = L-glutamyl-tRNA(Glu) + AMP + diphosphate. Functionally, catalyzes the attachment of glutamate to tRNA(Glu) in a two-step reaction: glutamate is first activated by ATP to form Glu-AMP and then transferred to the acceptor end of tRNA(Glu). The protein is Glutamate--tRNA ligase of Streptococcus thermophilus (strain CNRZ 1066).